A 431-amino-acid chain; its full sequence is MNHAHSQALFARAQARIPGGVNSPVRAFRGVGGDPVFFREGAGAWLTDVDGNRYVDLVGSWGPLILGHAYPPILDAIIDAARRGSSYGAPHADEVEFAELICATMPAVEMVRLVSSGTEATVAAIRVARGFTGREHILKFEGCFHGAGDPFLVKAGSGVETLGLPDSPGVPSALAKLTLTAPFNDLAAVERIFAENGQDIACAIIEPVVGNMGVLVPKPGYLEGLQALCQKHGVLLVLDEVMTGFRLSRGGAQELYGLKPDLTTMAKVIGGGMPMGAYGGRRDIMEKVAPAGPVYQSGTLSGNPVAVAAGLACLKALAAPGTYARLEEVSRMLEVGLLAEAKAADVPVTVNRVGSMLTVFFTGEPVYDYTSAKKADTARFGKFFHAMLNESVYLPPSQFEAAFVSLAIGEPEVAHVLAAARKAFRSLGKTG.

N6-(pyridoxal phosphate)lysine is present on lysine 267.

The protein belongs to the class-III pyridoxal-phosphate-dependent aminotransferase family. HemL subfamily. As to quaternary structure, homodimer. It depends on pyridoxal 5'-phosphate as a cofactor.

It localises to the cytoplasm. The enzyme catalyses (S)-4-amino-5-oxopentanoate = 5-aminolevulinate. Its pathway is porphyrin-containing compound metabolism; protoporphyrin-IX biosynthesis; 5-aminolevulinate from L-glutamyl-tRNA(Glu): step 2/2. The chain is Glutamate-1-semialdehyde 2,1-aminomutase from Myxococcus xanthus (strain DK1622).